The following is a 758-amino-acid chain: Matrix metalloproteinase-2 (758 aa).

The N-terminal stretch at 1 to 17 is a signal peptide; it reads MFSKYVLATLLALFAQS. His257 contributes to the Zn(2+) binding site. Glu258 is an active-site residue. The Zn(2+) site is built by His261 and His267. Positions 335–514 are disordered; it reads AYWPWNNPSN…HNKPRKPKPD (180 aa). Residues 338-348 are compositionally biased toward low complexity; that stretch reads PWNNPSNNPNN. The span at 349–476 shows a compositional bias: basic and acidic residues; sequence DRNRARERQE…EWERRNRNGA (128 aa). Positions 479–494 are enriched in low complexity; it reads PVTPTANTTPRPTNKP. A compositionally biased stretch (basic residues) spans 499–510; the sequence is HRQHHHHNKPRK. 4 Hemopexin repeats span residues 513–561, 565–610, 612–659, and 660–707; these read PDSC…WSAL, LTKV…GLPP, LTHI…WSGV, and GYNI…WMQC. An intrachain disulfide couples Cys516 to Cys707. Residues 739 to 756 traverse the membrane as a helical segment; the sequence is LRINHFILSILLLAIANW. Over 757–758 the chain is Cytoplasmic; the sequence is RS.

This sequence belongs to the peptidase M10A family. Requires Ca(2+) as cofactor. Zn(2+) is required as a cofactor. As to expression, widely expressed during embryogenesis including in the mesoderm, developing gut, central and peripheral nervous systems and imaginal disks. In the embryonic nervous system, expressed in neurons and glia. In third instar larvae, strongly expressed in the morphogenetic furrow of eye imaginal disks and in the optic lobe region of the brain. Expressed in posterior follicle cells in all mature stage 14 follicles but not in earlier follicles and is also expressed in some anterior follicle cells that help form dorsal eggshell structures.

Its subcellular location is the cell membrane. In terms of biological role, has metalloproteinase activity. Proteolytically cleaves the PGRP-LC receptor; involved in gut-fat body innate immunological communication (GFIC)-mediated activation of the imd/Relish signal transduction pathway. Required for larval tissue histolysis during metamorphosis and is involved in pupal head eversion and fusion of the wing imaginal tissue. Required for growth of the dorsal air sac primordium and development of the dorsal air sacs. Promotes embryonic motor axon fasciculation. Cleaves and activates frac to promote motor axon bundling during outgrowth. Promotes the reshaping of adult sensory neuron dendrites from a radial to lattice-like shape which occurs after eclosion by degrading the basement membrane on which the dendrites grow. Involved in inhibition of follicle stem cell proliferation by cleaving Dlp, inhibiting its interaction with wg and preventing Dlp-mediated spreading of wg to follicle stem cells to enhance their proliferation. Plays a role in wound healing. Involved in fat body dissociation which occurs during metamorphosis by degrading basement membrane components, leading to destruction of cell-basement membrane junctions. Required for posterior follicle cell degradation and ovulation. This Drosophila melanogaster (Fruit fly) protein is Matrix metalloproteinase-2.